Here is a 581-residue protein sequence, read N- to C-terminus: Pre-mRNA 3'-end-processing factor FIP1 (581 aa).

2 stretches are compositionally biased toward basic and acidic residues: residues 1–10 (MSAGEVERLV) and 32–42 (VHVHSDLAKDL). 3 disordered regions span residues 1-95 (MSAG…EDDV), 211-282 (TVQQ…ESPD), and 320-581 (RSAT…APAE). Positions 1 to 110 (MSAGEVERLV…DIKTGAPQYG (110 aa)) are sufficient for interaction with PAPOLA. Residues 1–332 (MSAGEVERLV…TEVDNNFSKP (332 aa)) are necessary for stimulating PAPOLA activity. 2 stretches are compositionally biased toward acidic residues: residues 43 to 54 (DENEVERPEEEN) and 80 to 94 (TEDD…DEDD). A phosphoserine mark is found at serine 84, serine 86, and serine 88. The sufficient for interaction with CPSF4 stretch occupies residues 136–219 (KGVDLDAPGS…ITVQQGRTGN (84 aa)). Positions 247 to 267 (SRNSTSSQSQTSTASRKASSS) are enriched in low complexity. Basic and acidic residues predominate over residues 271-282 (WQDRYGRAESPD). A Phosphoserine modification is found at serine 280. Residues 320–330 (RSATEVDNNFS) are compositionally biased toward polar residues. Residues 331-389 (KPPPFFPPGAPPTHLPPPPFLPPPPTVSTAPPLIPPPGIPITVPPPGFPPPPGAPPPSL) are compositionally biased toward pro residues. Position 411 is a phosphotyrosine (tyrosine 411). A compositionally biased stretch (polar residues) spans 419–435 (LTSSAPSWPSLVDTTKQ). The interval 428–581 (SLVDTTKQWD…QESTEAAPAE (154 aa)) is sufficient for interaction with CPSF1 and CSTF3. Residues 439–479 (YARREKDRDRDRERDRDRERERDRDRERERTRERERERDHS) show a composition bias toward basic and acidic residues. Residues 442-477 (REKDRDRDRERDRDRERERDRDRERERTRERERERD) form an arg/Asp/Glu-rich domain region. The tract at residues 478–535 (HSPTPSVFNSDEERYRYREYAERGYERHRASREKEERHRERRHREKEETRHKSSRSNS) is sufficient for interaction with AHCYL1. Phosphoserine is present on serine 479. Phosphothreonine is present on threonine 481. 2 positions are modified to phosphoserine: serine 483 and serine 487. A compositionally biased stretch (basic and acidic residues) spans 488–515 (DEERYRYREYAERGYERHRASREKEERH). Residues 529 to 538 (KSSRSNSRRR) show a composition bias toward basic residues. Residue serine 541 is modified to Phosphoserine. Over residues 547-557 (HRRHKHKKSKR) the composition is skewed to basic residues.

Belongs to the FIP1 family. Component of the cleavage and polyadenylation specificity factor (CPSF) complex, composed of CPSF1, CPSF2, CPSF3, CPSF4 and FIP1L1. Found in a complex with CPSF1, FIP1L1 and PAPOLA. Interacts with CPSF1, CPSF4, CSTF2 and CSTF3. Interacts with AHCYL1 (when phosphorylated); the interaction is direct and associates AHCYL1 with the CPSF complex and RNA. Interacts with PAPOLA; the interaction seems to be increased by the interaction with AHCYL1. Interacts with NUDT21/CPSF5; this interaction occurs in a RNA sequence-specific manner. Interacts (preferentially via unphosphorylated form and Arg/Glu/Asp-rich domain) with CPSF6 (via Arg/Ser-rich domain); this interaction mediates, at least in part, the interaction between the CFIm and CPSF complexes and may be inhibited by CPSF6 hyper-phosphorylation. Interacts (preferentially via unphosphorylated form and Arg/Asp/Glu-rich domain) with CPSF7 (via Arg/Ser-rich domain); this interaction mediates, at least in part, the interaction between the CFIm and CPSF complexes and may be inhibited by CPSF7 hyper-phosphorylation.

Its subcellular location is the nucleus. Functionally, component of the cleavage and polyadenylation specificity factor (CPSF) complex that plays a key role in pre-mRNA 3'-end formation, recognizing the AAUAAA signal sequence and interacting with poly(A) polymerase and other factors to bring about cleavage and poly(A) addition. FIP1L1 contributes to poly(A) site recognition and stimulates poly(A) addition. Binds to U-rich RNA sequence elements surrounding the poly(A) site. May act to tether poly(A) polymerase to the CPSF complex. This is Pre-mRNA 3'-end-processing factor FIP1 (Fip1l1) from Mus musculus (Mouse).